Here is a 757-residue protein sequence, read N- to C-terminus: Exo-alpha-(1-&gt;6)-L-arabinopyranosidase (757 aa).

Aspartate 232 is a catalytic residue.

Belongs to the glycosyl hydrolase 3 family. Homotetramer.

Its activity is regulated as follows. Completely inhibited by Cu(2+) and activated by Co(2+). Catalyzes the hydrolysis of a non-reducing terminal alpha-L-arabinopyranosidic linkage in ginsenoside Rb2 (alpha-L-arabinopyranosyl-(1-&gt;6)-alpha-D-glucopyranosyl) to release alpha-D-glucopyranosyl (Rd). It is not able to hydrolyze alpha-L-arabinofuranosyl-(1-&gt;6)-alpha-D-glucopyranosyl (Rc). This Bifidobacterium longum protein is Exo-alpha-(1-&gt;6)-L-arabinopyranosidase (apy).